The chain runs to 419 residues: Serine hydroxymethyltransferase 2 (419 aa).

Residues Leu120 and 124–126 (GHL) each bind (6S)-5,6,7,8-tetrahydrofolate. Lys229 carries the post-translational modification N6-(pyridoxal phosphate)lysine.

This sequence belongs to the SHMT family. Homodimer. Requires pyridoxal 5'-phosphate as cofactor.

The protein resides in the cytoplasm. The enzyme catalyses (6R)-5,10-methylene-5,6,7,8-tetrahydrofolate + glycine + H2O = (6S)-5,6,7,8-tetrahydrofolate + L-serine. It functions in the pathway one-carbon metabolism; tetrahydrofolate interconversion. The protein operates within amino-acid biosynthesis; glycine biosynthesis; glycine from L-serine: step 1/1. Functionally, catalyzes the reversible interconversion of serine and glycine with tetrahydrofolate (THF) serving as the one-carbon carrier. This reaction serves as the major source of one-carbon groups required for the biosynthesis of purines, thymidylate, methionine, and other important biomolecules. Also exhibits THF-independent aldolase activity toward beta-hydroxyamino acids, producing glycine and aldehydes, via a retro-aldol mechanism. The sequence is that of Serine hydroxymethyltransferase 2 from Salmonella typhi.